The chain runs to 202 residues: FMN reductase (NADH) RutF 1 (202 aa).

Positions 168-202 (PRTPRSGSAPAEPARAPRAVGARPAEGPALALRSA) are disordered. The span at 171–196 (PRSGSAPAEPARAPRAVGARPAEGPA) shows a compositional bias: low complexity.

The protein belongs to the non-flavoprotein flavin reductase family. RutF subfamily.

The catalysed reaction is FMNH2 + NAD(+) = FMN + NADH + 2 H(+). In terms of biological role, catalyzes the reduction of FMN to FMNH2 which is used to reduce pyrimidine by RutA via the Rut pathway. This Methylorubrum extorquens (strain PA1) (Methylobacterium extorquens) protein is FMN reductase (NADH) RutF 1.